Reading from the N-terminus, the 256-residue chain is Deoxyribose-phosphate aldolase (256 aa).

Aspartate 102 functions as the Proton donor/acceptor in the catalytic mechanism. The active-site Schiff-base intermediate with acetaldehyde is lysine 165. Lysine 197 (proton donor/acceptor) is an active-site residue.

Belongs to the DeoC/FbaB aldolase family. DeoC type 2 subfamily.

It is found in the cytoplasm. The catalysed reaction is 2-deoxy-D-ribose 5-phosphate = D-glyceraldehyde 3-phosphate + acetaldehyde. Its pathway is carbohydrate degradation; 2-deoxy-D-ribose 1-phosphate degradation; D-glyceraldehyde 3-phosphate and acetaldehyde from 2-deoxy-alpha-D-ribose 1-phosphate: step 2/2. Its function is as follows. Catalyzes a reversible aldol reaction between acetaldehyde and D-glyceraldehyde 3-phosphate to generate 2-deoxy-D-ribose 5-phosphate. The polypeptide is Deoxyribose-phosphate aldolase (Shewanella baltica (strain OS155 / ATCC BAA-1091)).